A 246-amino-acid polypeptide reads, in one-letter code: MQPPGPPPAYAPANGDFTFVSSADAEDLSGSIAAPDVKLNLGVSGDFIKESTATTFLRQRGYGWLLEVEDEDPEDNKPLLEELDIDLKDIYYKIRCVLMPMPSLGFNRQVVRDNPDFWGPLAVVLFFSMISLYGQFRVVSWIITIWIFGSLTIFLLARVLGGEVAYGQVLGVIGYSLLPLIVIAPILLVVGSFEMVSTLIKLFGVFWAAYSAASLLVGEEFKTKKPLLIYPIFLLYIYFLSLYTGV.

Residues 1–115 (MQPPGPPPAY…FNRQVVRDNP (115 aa)) are Cytoplasmic-facing. Residues 116–136 (DFWGPLAVVLFFSMISLYGQF) form a helical membrane-spanning segment. At 137–140 (RVVS) the chain is on the lumenal side. Residues 141–161 (WIITIWIFGSLTIFLLARVLG) form a helical membrane-spanning segment. Residues 162 to 168 (GEVAYGQ) lie on the Cytoplasmic side of the membrane. Residues 169–189 (VLGVIGYSLLPLIVIAPILLV) traverse the membrane as a helical segment. The Lumenal segment spans residues 190–197 (VGSFEMVS). The helical transmembrane segment at 198-218 (TLIKLFGVFWAAYSAASLLVG) threads the bilayer. Topologically, residues 219-225 (EEFKTKK) are cytoplasmic. A helical membrane pass occupies residues 226 to 246 (PLLIYPIFLLYIYFLSLYTGV).

It belongs to the YIP1 family. Interacts with YIPF3 and YIPF5.

It localises to the golgi apparatus. Its subcellular location is the cis-Golgi network membrane. In terms of biological role, involved in the maintenance of the Golgi structure. This is Protein YIPF4 (Yipf4) from Mus musculus (Mouse).